Reading from the N-terminus, the 61-residue chain is Small ribosomal subunit protein uS14 (61 aa).

Residues C24, C27, C40, and C43 each contribute to the Zn(2+) site.

Belongs to the universal ribosomal protein uS14 family. Zinc-binding uS14 subfamily. As to quaternary structure, part of the 30S ribosomal subunit. Contacts proteins S3 and S10. Zn(2+) serves as cofactor.

In terms of biological role, binds 16S rRNA, required for the assembly of 30S particles and may also be responsible for determining the conformation of the 16S rRNA at the A site. This chain is Small ribosomal subunit protein uS14, found in Leptospira biflexa serovar Patoc (strain Patoc 1 / Ames).